We begin with the raw amino-acid sequence, 321 residues long: Olfactory receptor 14J1 (321 aa).

Over 1 to 23 the chain is Extracellular; that stretch reads MVNLTSMSGFLLMGFSDERKLQI. N-linked (GlcNAc...) asparagine glycosylation is present at N3. A helical transmembrane segment spans residues 24–44; that stretch reads LHALVFLVTYLLALTGNLLII. Residues 45–52 lie on the Cytoplasmic side of the membrane; that stretch reads TIITVDRR. The helical transmembrane segment at 53 to 73 threads the bilayer; the sequence is LHSPMYYFLKHLSLLDLCFIS. Residues 74-97 lie on the Extracellular side of the membrane; it reads VTVPQSIANSLMGNGYISLVQCIL. Cysteines 95 and 187 form a disulfide. Residues 98–118 traverse the membrane as a helical segment; the sequence is QVFFFIALASSEVAILTVMSY. Over 119–137 the chain is Cytoplasmic; that stretch reads DRYAAICQPLHYETIMDPR. A helical membrane pass occupies residues 138 to 158; that stretch reads ACRHAVIAVWIAGGLSGLMHA. Residues 159-194 are Extracellular-facing; it reads AINFSIPLCGKRVIHQFFCDVPQMLKLACSYEFINE. A helical membrane pass occupies residues 195-215; it reads IALAAFTTSAAFICLISIVLS. Topologically, residues 216 to 235 are cytoplasmic; sequence YIRIFSTVLRIPSAEGRTKV. Residues 236–256 form a helical membrane-spanning segment; the sequence is FSTCLPHLFVATFFLSAAGFE. Topologically, residues 257–269 are extracellular; it reads FLRLPSDSSSTVD. Residues 270–290 traverse the membrane as a helical segment; it reads LVFSVFYTVIPPTLNPVIYSL. At 291–321 the chain is on the cytoplasmic side; that stretch reads RNDSMKAALRKMLSKEELPQRKMCLKAMFKL.

This sequence belongs to the G-protein coupled receptor 1 family.

The protein resides in the cell membrane. Odorant receptor. This is Olfactory receptor 14J1 (OR14J1) from Homo sapiens (Human).